The primary structure comprises 269 residues: Phosphate import ATP-binding protein PstB 1 (269 aa).

Residues 25–264 enclose the ABC transporter domain; it reads LSTEDLHVFY…PQVDLTNDYI (240 aa). 57-64 is a binding site for ATP; that stretch reads GPSGSGKS.

This sequence belongs to the ABC transporter superfamily. Phosphate importer (TC 3.A.1.7) family. As to quaternary structure, the complex is composed of two ATP-binding proteins (PstB), two transmembrane proteins (PstC and PstA) and a solute-binding protein (PstS).

The protein resides in the cell membrane. The catalysed reaction is phosphate(out) + ATP + H2O = ADP + 2 phosphate(in) + H(+). In terms of biological role, part of the ABC transporter complex PstSACB involved in phosphate import. Responsible for energy coupling to the transport system. The chain is Phosphate import ATP-binding protein PstB 1 from Lactiplantibacillus plantarum (strain ATCC BAA-793 / NCIMB 8826 / WCFS1) (Lactobacillus plantarum).